A 912-amino-acid chain; its full sequence is Cadherin-2 (912 aa).

The signal sequence occupies residues 1-28; it reads MCRIAGTPPRILPPLALMLLAALQQAPI. Positions 29 to 164 are excised as a propeptide; sequence KATCEDMLCK…DSSHLKRQKR (136 aa). Cadherin domains are found at residues 165–272, 273–387, 388–502, 503–609, and 610–720; these read DWVI…RPEF, LHQV…PPEF, TAMT…SPYF, VPNP…DNAP, and QVNP…DVDR. Over 165–729 the chain is Extracellular; it reads DWVIPPINLP…RIVGAGLGTG (565 aa). Residues Glu175, Asp231, Glu233, Asp264, Met265, Asn266, Asp267, and Asn268 each coordinate Ca(2+). A glycan (N-linked (GlcNAc...) asparagine) is linked at Asn278. Positions 298, 300, and 306 each coordinate Ca(2+). An N-linked (GlcNAc...) asparagine glycan is attached at Asn330. Position 358 (Asp358) interacts with Ca(2+). N-linked (GlcNAc...) asparagine glycosylation is found at Asn407, Asn578, Asn628, and Asn657. The helical transmembrane segment at 730–752 threads the bilayer; the sequence is AIIAILLCIIILLILVLMFVVWM. Residues 753-912 are Cytoplasmic-facing; the sequence is KRRDKERQAK…LADMYGGGDD (160 aa). Over residues 869 to 886 the composition is skewed to low complexity; sequence SGSTAGSLSSLNSSSSGG. The tract at residues 869–890 is disordered; sequence SGSTAGSLSSLNSSSSGGEQDY.

As to quaternary structure, homodimer (via extracellular region). Can also form heterodimers with other cadherins (via extracellular region). Dimerization occurs in trans, i.e. with a cadherin chain from another cell. Interacts with CTNNA2. In terms of tissue distribution, expressed at intercalated disks in the heart (at protein level).

It localises to the cell membrane. The protein localises to the sarcolemma. The protein resides in the cell junction. It is found in the cell surface. Its subcellular location is the desmosome. It localises to the adherens junction. Functionally, calcium-dependent cell adhesion protein; preferentially mediates homotypic cell-cell adhesion. Cadherins may thus contribute to the sorting of heterogeneous cell types, and thereby play an important role during embryonic development. Required for proper neurite branching, and pre- and postsynaptic organization. In Gallus gallus (Chicken), this protein is Cadherin-2 (CDH2).